The chain runs to 203 residues: MLTEQQRRELDWEKTDGLMPVIVQHAVSGEVLMLGYMNPEALDKTIESGKVTFFSRTKQRLWTKGETSGNFLNVVNIAPDCDNDTLLVLANPIGPTCHKGTSSCFGDTAHQWLFLYQLEQLLAERKSADPETSYTAKLYASGTKRIAQKVGEEGVETALAATVHDRFELTNEASDLMYHLLVLLQDQDLDLTTVIENLRKRHQ.

The tract at residues 1-114 (MLTEQQRREL…FGDTAHQWLF (114 aa)) is phosphoribosyl-AMP cyclohydrolase. The interval 115–203 (LYQLEQLLAE…VIENLRKRHQ (89 aa)) is phosphoribosyl-ATP pyrophosphohydrolase.

This sequence in the N-terminal section; belongs to the PRA-CH family. It in the C-terminal section; belongs to the PRA-PH family.

Its subcellular location is the cytoplasm. It catalyses the reaction 1-(5-phospho-beta-D-ribosyl)-ATP + H2O = 1-(5-phospho-beta-D-ribosyl)-5'-AMP + diphosphate + H(+). The enzyme catalyses 1-(5-phospho-beta-D-ribosyl)-5'-AMP + H2O = 1-(5-phospho-beta-D-ribosyl)-5-[(5-phospho-beta-D-ribosylamino)methylideneamino]imidazole-4-carboxamide. It participates in amino-acid biosynthesis; L-histidine biosynthesis; L-histidine from 5-phospho-alpha-D-ribose 1-diphosphate: step 2/9. The protein operates within amino-acid biosynthesis; L-histidine biosynthesis; L-histidine from 5-phospho-alpha-D-ribose 1-diphosphate: step 3/9. This chain is Histidine biosynthesis bifunctional protein HisIE, found in Shigella sonnei (strain Ss046).